A 350-amino-acid polypeptide reads, in one-letter code: Protein RecA (350 aa).

G80–T87 is a binding site for ATP.

It belongs to the RecA family.

The protein resides in the cytoplasm. Its function is as follows. Can catalyze the hydrolysis of ATP in the presence of single-stranded DNA, the ATP-dependent uptake of single-stranded DNA by duplex DNA, and the ATP-dependent hybridization of homologous single-stranded DNAs. It interacts with LexA causing its activation and leading to its autocatalytic cleavage. This Chlorobium limicola (strain DSM 245 / NBRC 103803 / 6330) protein is Protein RecA.